A 105-amino-acid chain; its full sequence is Large ribosomal subunit protein eL36 (105 aa).

The protein belongs to the eukaryotic ribosomal protein eL36 family. As to quaternary structure, component of the large ribosomal subunit.

The protein resides in the cytoplasm. It is found in the cytosol. Component of the large ribosomal subunit. The ribosome is a large ribonucleoprotein complex responsible for the synthesis of proteins in the cell. This is Large ribosomal subunit protein eL36 (rpl36) from Xenopus laevis (African clawed frog).